The primary structure comprises 111 residues: Photosystem II reaction center Psb28 protein (111 aa).

Belongs to the Psb28 family. Part of the photosystem II complex.

The protein localises to the cellular thylakoid membrane. The chain is Photosystem II reaction center Psb28 protein from Acaryochloris marina (strain MBIC 11017).